We begin with the raw amino-acid sequence, 167 residues long: V-type proton ATPase subunit c' (167 aa).

At 1-13 (MAEIMADSELAPK) the chain is on the lumenal side. Residues 14-34 (FAPFIGMAGIAAAMIFGSAGA) traverse the membrane as a helical segment. Over 35-59 (AYGTAKSGIGIAGVGTFRPDLIMKC) the chain is Cytoplasmic. Residues 60–80 (LIPVVMSGIIAVYALVVAVLI) form a helical membrane-spanning segment. Topologically, residues 81–101 (AQDLGPPGSGQHYSLFNGFMH) are lumenal. Residues 102-122 (LACGLSVGLTGLAAGYCIGIV) form a helical membrane-spanning segment. The Cytoplasmic segment spans residues 123–140 (GDKGVRSFMLQSRIFVGM). A helical transmembrane segment spans residues 141–161 (VLILIFGEVLGLYGLIVALIL). The Lumenal portion of the chain corresponds to 162–167 (NTKSKG).

This sequence belongs to the V-ATPase proteolipid subunit family. In terms of assembly, V-ATPase is a heteromultimeric enzyme composed of a peripheral catalytic V1 complex (components A to H) attached to an integral membrane V0 proton pore complex (components: a, c, c', c'', d, e, f and VOA1). The decameric c-ring forms the proton-conducting pore, and is composed of eight proteolipid subunits c, one subunit c' and one subunit c''.

It localises to the vacuole membrane. Proton-conducting pore forming subunit of the V0 complex of vacuolar(H+)-ATPase (V-ATPase), a multisubunit enzyme composed of a peripheral complex (V1) that hydrolyzes ATP and a membrane integral complex (V0) that translocates protons. V-ATPase is responsible for acidifying and maintaining the pH of intracellular compartments. The chain is V-type proton ATPase subunit c' (vma-11) from Neurospora crassa (strain ATCC 24698 / 74-OR23-1A / CBS 708.71 / DSM 1257 / FGSC 987).